The following is a 145-amino-acid chain: 3-dehydroquinate dehydratase (145 aa).

Residue tyrosine 24 is the Proton acceptor of the active site. Positions 76, 82, and 89 each coordinate substrate. Histidine 102 serves as the catalytic Proton donor. Substrate is bound by residues 103–104 (VS) and arginine 113.

It belongs to the type-II 3-dehydroquinase family. In terms of assembly, homododecamer.

The enzyme catalyses 3-dehydroquinate = 3-dehydroshikimate + H2O. It participates in metabolic intermediate biosynthesis; chorismate biosynthesis; chorismate from D-erythrose 4-phosphate and phosphoenolpyruvate: step 3/7. Functionally, catalyzes a trans-dehydration via an enolate intermediate. The chain is 3-dehydroquinate dehydratase from Herminiimonas arsenicoxydans.